We begin with the raw amino-acid sequence, 93 residues long: Neutrophil cationic peptide 1 type B (93 aa).

A signal peptide spans 1–19; the sequence is MRTVPLFAACLLLTLMAQA. The propeptide occupies 20 to 62; that stretch reads EPLPRAADHSDTKMKGDREDHVAVISFWEEESTSLQDAGAGAG. 3 disulfides stabilise this stretch: C65-C93, C67-C82, and C72-C92.

This sequence belongs to the alpha-defensin family. In terms of tissue distribution, bone marrow.

It localises to the secreted. Functionally, has antibiotic, anti-fungi and antiviral activity. This Cavia porcellus (Guinea pig) protein is Neutrophil cationic peptide 1 type B.